Here is a 264-residue protein sequence, read N- to C-terminus: Cytosolic Fe-S cluster assembly factor Nubp2 homolog (264 aa).

14-21 is an ATP binding site; sequence GKGGVGKS. Residues Cys-188 and Cys-191 each coordinate [4Fe-4S] cluster.

It belongs to the Mrp/NBP35 ATP-binding proteins family. NUBP2/CFD1 subfamily. Heterotetramer of 2 Nubp1 and 2 Nubp2 chains. It depends on [4Fe-4S] cluster as a cofactor.

The protein resides in the cytoplasm. In terms of biological role, component of the cytosolic iron-sulfur (Fe/S) protein assembly (CIA) machinery. Required for maturation of extramitochondrial Fe-S proteins. The Nubp1-Nubp2 heterotetramer forms a Fe-S scaffold complex, mediating the de novo assembly of an Fe-S cluster and its transfer to target apoproteins. The sequence is that of Cytosolic Fe-S cluster assembly factor Nubp2 homolog from Drosophila grimshawi (Hawaiian fruit fly).